We begin with the raw amino-acid sequence, 267 residues long: Probable E3 ubiquitin-protein ligase dma1 (267 aa).

The FHA domain maps to isoleucine 60 to leucine 116. An RING-type zinc finger spans residues cysteine 192–arginine 236.

It belongs to the DMA1 family. In terms of assembly, interacts with sid4.

The protein localises to the cytoplasm. The protein resides in the cytoskeleton. It is found in the microtubule organizing center. Its subcellular location is the spindle pole body. The enzyme catalyses S-ubiquitinyl-[E2 ubiquitin-conjugating enzyme]-L-cysteine + [acceptor protein]-L-lysine = [E2 ubiquitin-conjugating enzyme]-L-cysteine + N(6)-ubiquitinyl-[acceptor protein]-L-lysine.. Its function is as follows. Probable E3 ubiquitin-protein ligase which is a component of the spindle assembly checkpoint, required to prevent septum formation and premature exit from mitosis if spindle function is compromised. Inhibits the septation initiation netwok (SIN) during spindle checkpoint activation. The effect appears to be mediated through preventing the SIN activator, plo1 kinase, from localizing to the SPB. This chain is Probable E3 ubiquitin-protein ligase dma1 (dma1), found in Schizosaccharomyces pombe (strain 972 / ATCC 24843) (Fission yeast).